The chain runs to 860 residues: DNA mismatch repair protein MutS (860 aa).

Glycine 608–serine 615 is a binding site for ATP.

Belongs to the DNA mismatch repair MutS family.

Its function is as follows. This protein is involved in the repair of mismatches in DNA. It is possible that it carries out the mismatch recognition step. This protein has a weak ATPase activity. This is DNA mismatch repair protein MutS from Borrelia turicatae (strain 91E135).